Reading from the N-terminus, the 250-residue chain is Ubiquinone/menaquinone biosynthesis C-methyltransferase UbiE (250 aa).

S-adenosyl-L-methionine-binding positions include threonine 73, aspartate 94, 122 to 123 (NA), and serine 139.

Belongs to the class I-like SAM-binding methyltransferase superfamily. MenG/UbiE family.

The catalysed reaction is a 2-demethylmenaquinol + S-adenosyl-L-methionine = a menaquinol + S-adenosyl-L-homocysteine + H(+). The enzyme catalyses a 2-methoxy-6-(all-trans-polyprenyl)benzene-1,4-diol + S-adenosyl-L-methionine = a 5-methoxy-2-methyl-3-(all-trans-polyprenyl)benzene-1,4-diol + S-adenosyl-L-homocysteine + H(+). The protein operates within quinol/quinone metabolism; menaquinone biosynthesis; menaquinol from 1,4-dihydroxy-2-naphthoate: step 2/2. Its pathway is cofactor biosynthesis; ubiquinone biosynthesis. In terms of biological role, methyltransferase required for the conversion of demethylmenaquinol (DMKH2) to menaquinol (MKH2) and the conversion of 2-polyprenyl-6-methoxy-1,4-benzoquinol (DDMQH2) to 2-polyprenyl-3-methyl-6-methoxy-1,4-benzoquinol (DMQH2). This is Ubiquinone/menaquinone biosynthesis C-methyltransferase UbiE from Francisella tularensis subsp. tularensis (strain WY96-3418).